The following is a 673-amino-acid chain: Cyclic nucleotide-binding domain-containing protein 2 (673 aa).

The span at 1–15 (MNRSANPEAASSTSH) shows a compositional bias: polar residues. Residues 1 to 89 (MNRSANPEAA…PQPKDRPGVQ (89 aa)) are disordered. Residues 43-86 (PADKSDTTESKSESGSDSRSEEDKESPASIKEIKAETPQPKDRP) show a composition bias toward basic and acidic residues. An a nucleoside 3',5'-cyclic phosphate-binding site is contributed by 206-329 (CYRSYTESLQ…ETQYRYNFFR (124 aa)).

In terms of tissue distribution, testis-specific. Exclusively expressed in testicular germ cells while it is not present in mature sperm (at protein level).

The protein resides in the cytoplasm. The protein localises to the cytosol. Its function is as follows. Essential for male fertility. Plays an important role in spermatogenesis and regulates sperm motility by controlling the development of the flagellar bending of sperm. In Mus musculus (Mouse), this protein is Cyclic nucleotide-binding domain-containing protein 2 (Cnbd2).